A 93-amino-acid polypeptide reads, in one-letter code: NADH-ubiquinone oxidoreductase chain 4L (93 aa).

Helical transmembrane passes span 3–23 (LTIL…GPLG), 27–47 (IIKL…LIIL), and 55–75 (ILGL…SAIG).

It belongs to the complex I subunit 4L family.

It localises to the mitochondrion membrane. It carries out the reaction a ubiquinone + NADH + 5 H(+)(in) = a ubiquinol + NAD(+) + 4 H(+)(out). Core subunit of the mitochondrial membrane respiratory chain NADH dehydrogenase (Complex I) that is believed to belong to the minimal assembly required for catalysis. Complex I functions in the transfer of electrons from NADH to the respiratory chain. The immediate electron acceptor for the enzyme is believed to be ubiquinone. The protein is NADH-ubiquinone oxidoreductase chain 4L (ND4L) of Wickerhamomyces canadensis (Yeast).